We begin with the raw amino-acid sequence, 167 residues long: Single-stranded DNA-binding protein 2 (167 aa).

The SSB domain maps to 1–104 (MLNRVVLVGR…VVCDSVQFLE (104 aa)). The segment at 107-167 (NAQQNGGQRQ…IDISDDDLPF (61 aa)) is disordered. Low complexity-rich tracts occupy residues 109–118 (QQNGGQRQQN) and 132–147 (SGQN…TKQS). The short motif at 162–167 (DDDLPF) is the Important for interaction with partner proteins element.

In terms of assembly, homotetramer.

Plays an important role in DNA replication, recombination and repair. Binds to ssDNA and to an array of partner proteins to recruit them to their sites of action during DNA metabolism. The sequence is that of Single-stranded DNA-binding protein 2 (ssb2) from Staphylococcus aureus (strain MSSA476).